Consider the following 444-residue polypeptide: RAC family serine/threonine-protein kinase homolog (444 aa).

In terms of domain architecture, PH spans 5-100; sequence PIKHEGFLTK…WIEILINERE (96 aa). The Protein kinase domain occupies 120-374; sequence FELLNLVGKG…PNLIKRHPFF (255 aa). ATP contacts are provided by residues 126–134 and Lys149; that span reads VGKGSFGKV. The active-site Proton acceptor is the Asp243. Position 278 is a phosphothreonine (Thr278). The region spanning 375–444 is the AGC-kinase C-terminal domain; it reads RSIDWEQLFQ…TYVAESEHLR (70 aa).

This sequence belongs to the protein kinase superfamily. AGC Ser/Thr protein kinase family. RAC subfamily.

The catalysed reaction is L-seryl-[protein] + ATP = O-phospho-L-seryl-[protein] + ADP + H(+). The enzyme catalyses L-threonyl-[protein] + ATP = O-phospho-L-threonyl-[protein] + ADP + H(+). In terms of biological role, predominantly involved during the aggregation to control cell polarity and chemotaxis. Phosphorylates talB, gefN, gefS, PI4P 5-kinase and gacQ. This Dictyostelium discoideum (Social amoeba) protein is RAC family serine/threonine-protein kinase homolog (pkbA).